Here is a 410-residue protein sequence, read N- to C-terminus: Single Ig IL-1-related receptor (410 aa).

Residues 1–118 (MPGVCDRAPD…TLQRAGPTSH (118 aa)) are Extracellular-facing. An Ig-like C2-type domain is found at 9–109 (PDFLSPSEDQ…IQNISFSSFT (101 aa)). N31, N73, N86, and N102 each carry an N-linked (GlcNAc...) asparagine glycan. The cysteines at positions 32 and 98 are disulfide-linked. The chain crosses the membrane as a helical; Signal-anchor for type III membrane protein span at residues 119 to 139 (VAAVLASLLVLLALLLAALLY). At 140 to 410 (VKCRLNVLLW…FYCLVSKDDM (271 aa)) the chain is on the cytoplasmic side. The TIR domain maps to 163-307 (KLYDAYVSYS…DFWKEVQLAL (145 aa)). A disordered region spans residues 340-390 (EGRALDSEVDPDPEGDLGVRGPVFGEPSAPPHTSGVSLGESRSSEVDVSDL). S383 bears the Phosphoserine mark.

Belongs to the interleukin-1 receptor family. As to quaternary structure, interacts with IL1R1, IRAK1, TLR4, TLR5, TLR9 and TRAF6. Upon IL-1 stimulation found in a complex at least composed of IL1R1, SIGIRR, MYD88, IRAK1 and TRAF6. Upon stimulation with LPC found in a complex at least composed of TLR4, SIG1IR, MYD88, IRAK1 and TRAF6. Interacts with PALM3. As to expression, mainly expressed in epithelial tissues such as kidney, lung and gut.

The protein resides in the membrane. Acts as a negative regulator of the Toll-like and IL-1R receptor signaling pathways. Attenuates the recruitment of receptor-proximal signaling components to the TLR4 receptor, probably through an TIR-TIR domain interaction with TLR4. Through its extracellular domain interferes with the heterodimerization of Il1R1 and IL1RAP. This is Single Ig IL-1-related receptor (SIGIRR) from Homo sapiens (Human).